Here is a 125-residue protein sequence, read N- to C-terminus: Small ribosomal subunit protein uS13 (125 aa).

This sequence belongs to the universal ribosomal protein uS13 family. Part of the 30S ribosomal subunit. Forms a loose heterodimer with protein S19. Forms two bridges to the 50S subunit in the 70S ribosome.

Its function is as follows. Located at the top of the head of the 30S subunit, it contacts several helices of the 16S rRNA. In the 70S ribosome it contacts the 23S rRNA (bridge B1a) and protein L5 of the 50S subunit (bridge B1b), connecting the 2 subunits; these bridges are implicated in subunit movement. Contacts the tRNAs in the A and P-sites. The chain is Small ribosomal subunit protein uS13 from Rickettsia massiliae (strain Mtu5).